We begin with the raw amino-acid sequence, 208 residues long: Large ribosomal subunit protein bL25 (208 aa).

Belongs to the bacterial ribosomal protein bL25 family. CTC subfamily. In terms of assembly, part of the 50S ribosomal subunit; part of the 5S rRNA/L5/L18/L25 subcomplex. Contacts the 5S rRNA. Binds to the 5S rRNA independently of L5 and L18.

Its function is as follows. This is one of the proteins that binds to the 5S RNA in the ribosome where it forms part of the central protuberance. This Paracoccus denitrificans (strain Pd 1222) protein is Large ribosomal subunit protein bL25.